The primary structure comprises 435 residues: MLDIKKIRQEPDFYKEKLATRGVKPEEIDEVIALDKKRRELLQQTETMKAQRNEASKKIGEAKRNGESADAAIKETRELGDKIKELDTEVEANDAELHDKMAHLPNVPHDGVPVSLTEDGAVELRKVGKVRDFDFEPKHHWDIGENLGILDFDRAGKVSGARFVYYLGLGAQLERAVYNFMLDEHMKEGYTEVLPPYIVNADSMYGTGQFPKFKEGVYQVNGEDMTLIPTAEVPLTNYYRGEVIPTEELPVYVTALTPSFRSEAGAAGRDTRGLIRMHQFNKVEMVKYTKPENSWDELEKMTANAENILKKLNLPYHVITLTTGDMSFTASETHDLELWMPAQNKYREVSSCSNCLDFQARRMHTQYRDENGKLQYVHTLNGSGLAVGRTVAAILENYQNADGSVTIPEVLVPYMHGVTKITKENAVPFRNKVNK.

The disordered stretch occupies residues 48-68; the sequence is MKAQRNEASKKIGEAKRNGES. A compositionally biased stretch (basic and acidic residues) spans 49-68; it reads KAQRNEASKKIGEAKRNGES. Position 230–232 (230–232) interacts with L-serine; it reads TAE. Residue 261–263 participates in ATP binding; that stretch reads RSE. Position 284 (Glu284) interacts with L-serine. 348 to 351 serves as a coordination point for ATP; the sequence is EVSS. Residue Ser383 participates in L-serine binding.

Belongs to the class-II aminoacyl-tRNA synthetase family. Type-1 seryl-tRNA synthetase subfamily. As to quaternary structure, homodimer. The tRNA molecule binds across the dimer.

It localises to the cytoplasm. The enzyme catalyses tRNA(Ser) + L-serine + ATP = L-seryl-tRNA(Ser) + AMP + diphosphate + H(+). It catalyses the reaction tRNA(Sec) + L-serine + ATP = L-seryl-tRNA(Sec) + AMP + diphosphate + H(+). It participates in aminoacyl-tRNA biosynthesis; selenocysteinyl-tRNA(Sec) biosynthesis; L-seryl-tRNA(Sec) from L-serine and tRNA(Sec): step 1/1. In terms of biological role, catalyzes the attachment of serine to tRNA(Ser). Is also able to aminoacylate tRNA(Sec) with serine, to form the misacylated tRNA L-seryl-tRNA(Sec), which will be further converted into selenocysteinyl-tRNA(Sec). The polypeptide is Serine--tRNA ligase (Limosilactobacillus reuteri (strain DSM 20016) (Lactobacillus reuteri)).